Consider the following 492-residue polypeptide: Solute carrier family 2, facilitated glucose transporter member 1 (492 aa).

Met1 bears the N-acetylmethionine mark. Residues Met1–Arg11 are Cytoplasmic-facing. The helical transmembrane segment at Leu12–Ile33 threads the bilayer. At Asn34–Ser66 the chain is on the extracellular side. Residue Asn45 is glycosylated (N-linked (GlcNAc...) asparagine). The chain crosses the membrane as a helical span at residues Leu67–Val87. Residues Asn88–Phe90 are Cytoplasmic-facing. Residues Gly91–Phe112 form a helical membrane-spanning segment. Over Ser113–Glu120 the chain is Extracellular. A helical membrane pass occupies residues Met121 to Val144. Residues Gly145–Ala155 lie on the Cytoplasmic side of the membrane. The helical transmembrane segment at Leu156–Leu176 threads the bilayer. D-glucose is bound at residue Gln161. Residues Asp177 to Leu185 are Extracellular-facing. Residues Trp186–Phe206 form a helical membrane-spanning segment. The Cytoplasmic segment spans residues Cys207–Pro271. The residue at position 226 (Ser226) is a Phosphoserine. Residues Ile272 to Tyr293 form a helical membrane-spanning segment. Residues Gln282–Gln283 and Asn288 contribute to the D-glucose site. The Extracellular portion of the chain corresponds to Ser294 to Pro306. The helical transmembrane segment at Val307–Val328 threads the bilayer. Residue Asn317 participates in D-glucose binding. At Glu329–Arg334 the chain is on the cytoplasmic side. Residues Thr335–Leu355 form a helical membrane-spanning segment. The Extracellular segment spans residues Ala356–Ser365. The helical transmembrane segment at Tyr366–Trp388 threads the bilayer. D-glucose contacts are provided by Glu380 and Trp388. The Cytoplasmic segment spans residues Phe389–Pro401. Residues Ala402–Phe422 traverse the membrane as a helical segment. Residues Gln423–Cys429 lie on the Extracellular side of the membrane. A helical membrane pass occupies residues Gly430–Phe450. Residues Lys451–Val492 lie on the Cytoplasmic side of the membrane. Ser465 is modified (phosphoserine). The tract at residues Arg468–Val492 is disordered. At Thr478 the chain carries Phosphothreonine. Phosphoserine is present on Ser490.

This sequence belongs to the major facilitator superfamily. Sugar transporter (TC 2.A.1.1) family. Glucose transporter subfamily. In terms of assembly, found in a complex with ADD2, DMTN and SLC2A1. Interacts (via C-terminus cytoplasmic region) with DMTN. Interacts with SNX27; the interaction is required when endocytosed to prevent degradation in lysosomes and promote recycling to the plasma membrane. Interacts with GIPC (via PDZ domain). Interacts with STOM. Interacts with SGTA (via Gln-rich region). Interacts with BSG. Interacts with SMIM43; the interaction may promote SLC2A1-mediated glucose transport to meet the energy needs of mesendoderm differentiation. Phosphorylation at Ser-226 by PKC promotes glucose uptake by increasing cell membrane localization. In terms of tissue distribution, detected in brain capillary (at protein level). Detected in brain capillary.

Its subcellular location is the cell membrane. The protein resides in the photoreceptor inner segment. The enzyme catalyses D-glucose(out) = D-glucose(in). The uptake of glucose is inhibited by cytochalasin B. Glucose uptake is increased in response to phorbol ester 12-O-tetradecanoylphorbol-13-acetate (TPA) treatment: TPA-induced glucose uptake requires phosphorylation at Ser-226. Functionally, facilitative glucose transporter, which is responsible for constitutive or basal glucose uptake. Has a very broad substrate specificity; can transport a wide range of aldoses including both pentoses and hexoses. Most important energy carrier of the brain: present at the blood-brain barrier and assures the energy-independent, facilitative transport of glucose into the brain. In association with BSG and NXNL1, promotes retinal cone survival by increasing glucose uptake into photoreceptors. Required for mesendoderm differentiation. The protein is Solute carrier family 2, facilitated glucose transporter member 1 of Bos taurus (Bovine).